Here is a 322-residue protein sequence, read N- to C-terminus: TATA box-binding protein-associated factor RNA polymerase I subunit D (322 aa).

Disordered regions lie at residues 1–70 (MAQS…SIEP) and 82–116 (FKKK…RITR). S23 is modified (phosphoserine). The segment covering 82–107 (FKKKKRKKRKKRKYEPKLRPRGRPRG) has biased composition (basic residues). Position 137 is a phosphoserine (S137). Residues 198 to 219 (YMDDDGSLSPIEEPLTEDEATN) are disordered. S232 carries the phosphoserine modification. Over residues 257–267 (FSKKAKDATHR) the composition is skewed to basic and acidic residues. The disordered stretch occupies residues 257 to 276 (FSKKAKDATHREKGHRRTLK).

Component of the transcription factor SL1/TIF-IB complex, composed of TBP and at least TAF1A, TAF1B, TAF1C and TAF1D. Interacts with UBTF.

The protein localises to the nucleus. Functionally, component of the transcription factor SL1/TIF-IB complex, which is involved in the assembly of the PIC (preinitiation complex) during RNA polymerase I-dependent transcription. The rate of PIC formation probably is primarily dependent on the rate of association of SL1/TIF-IB with the rDNA promoter. SL1/TIF-IB is involved in stabilization of nucleolar transcription factor 1/UBTF on rDNA. Formation of SL1/TIF-IB excludes the association of TBP with TFIID subunits. The protein is TATA box-binding protein-associated factor RNA polymerase I subunit D (Taf1d) of Mus musculus (Mouse).